The following is a 124-amino-acid chain: Large ribosomal subunit protein mL52 (124 aa).

The N-terminal 23 residues, 1–23 (MAALGMLLSTGVRRLHCGSAARA), are a transit peptide targeting the mitochondrion. Residues 99-124 (LQEEKRKQQNALKPKGVLLQNPGPSQ) form a disordered region.

This sequence belongs to the mitochondrion-specific ribosomal protein mL52 family. As to quaternary structure, component of the mitochondrial ribosome large subunit (39S) which comprises a 16S rRNA and about 50 distinct proteins.

It localises to the mitochondrion. The protein is Large ribosomal subunit protein mL52 (MRPL52) of Bos taurus (Bovine).